Here is a 1642-residue protein sequence, read N- to C-terminus: Cobra venom factor (1642 aa).

The first 22 residues, 1–22, serve as a signal peptide directing secretion; it reads MERMALYLVAALLIGFPGSSHG. Residues Asn153, Asn158, and Asn209 are each glycosylated (N-linked (GlcNAc...) asparagine). The Mg(2+) site is built by Pro516, Asp539, Val540, and Asp542. 12 disulfides stabilise this stretch: Cys544–Cys801, Cys609–Cys644, Cys677–Cys704, Cys678–Cys711, Cys691–Cys712, Cys857–Cys1492, Cys1340–Cys1468, Cys1368–Cys1437, Cys1485–Cys1490, Cys1497–Cys1569, Cys1516–Cys1640, and Cys1616–Cys1625. Residues 650-732 constitute a propeptide that is removed on maturation; that stretch reads RRRRSSVLLL…QRESELFLAR (83 aa). The tract at residues 654–732 is C3a-like domain; it reads SSVLLLDSNA…QRESELFLAR (79 aa). One can recognise an Anaphylatoxin-like domain in the interval 677–712; it reads CCEDVMHENPMGYTCEKRAKYIQEGDACKAAFLECC. Residues 736–747 are factor B binding site; the sequence is EDGFIADSDIIS. The propeptide occupies 985-1263; the sequence is HLIITPSGCG…VMAFQALAEY (279 aa). The interval 985–1263 is C3d-like domain; sequence HLIITPSGCG…VMAFQALAEY (279 aa). The isoglutamyl cysteine thioester (Cys-Gln) cross-link spans 993–996; that stretch reads CGEQ. A factor H binding site region spans residues 1190-1253; that stretch reads VLMAASTGRD…GETYGQTQAT (64 aa). Asn1346 is a glycosylation site (N-linked (GlcNAc...) asparagine). Residues 1497–1640 enclose the NTR domain; that stretch reads CSSLNHQERI…FSYTLTEFGC (144 aa).

The protein belongs to the venom complement C3 homolog family. Heterotrimer of alpha, beta and gamma chains; disulfide-linked. Is active with factor B in the presence of factor D. First processed by the removal of 4 Arg residues by furin-type protease, forming two chains, alpha and gamma/beta precursor, linked by a disulfide bond. Probably, the cobrin cleaves the C3a-like domain and then the C3d-like domain, generating the mature cobra venom factor (CVF). This mature CVF is composed of three chains: alpha, gamma and beta. In terms of processing, contains 3 N-linked oligosaccharide chains, two in the alpha-chain and one in the beta-chain. Glycosylation is not required for the biological activity. However, it contributes to the immunogenicity of CVF. The carbohydrate content is 7.4. The major oligosaccharide is a symmetric fucosylated biantennary complex-type chain with an unusual alpha-galactosylated Le(x) structure at its non-reducing end. As to expression, expressed by the venom gland.

It is found in the secreted. Its function is as follows. Complement-activating protein in cobra venom. It is a structural and functional analog of complement component C3b, the activated form of C3. It binds factor B (CFB), which is subsequently cleaved by factor D (CFD) to form the bimolecular complex CVF/Bb. CVF/Bb is a C3/C5 convertase that cleaves both complement components C3 and C5. Structurally, it resembles the C3b degradation product C3c, which is not able to form a C3/C5 convertase. Unlike C3b/Bb, CVF/Bb is a stable complex and completely resistant to the actions of complement regulatory factors H (CFH) and I (CFI). Therefore, CVF continuously activates complement resulting in the depletion of complement activity. The sequence is that of Cobra venom factor from Naja kaouthia (Monocled cobra).